A 304-amino-acid polypeptide reads, in one-letter code: Ornithine carbamoyltransferase (304 aa).

Carbamoyl phosphate is bound by residues 53–56 (STRT), Q80, R104, and 131–134 (HPCQ). L-ornithine-binding positions include N162, D222, and 226 to 227 (SM). Carbamoyl phosphate-binding positions include 261 to 262 (CL) and R289.

This sequence belongs to the aspartate/ornithine carbamoyltransferase superfamily. OTCase family.

The protein localises to the cytoplasm. The catalysed reaction is carbamoyl phosphate + L-ornithine = L-citrulline + phosphate + H(+). It participates in amino-acid biosynthesis; L-arginine biosynthesis; L-arginine from L-ornithine and carbamoyl phosphate: step 1/3. Its function is as follows. Reversibly catalyzes the transfer of the carbamoyl group from carbamoyl phosphate (CP) to the N(epsilon) atom of ornithine (ORN) to produce L-citrulline. In Rhizobium johnstonii (strain DSM 114642 / LMG 32736 / 3841) (Rhizobium leguminosarum bv. viciae), this protein is Ornithine carbamoyltransferase.